The following is a 150-amino-acid chain: 3-dehydroquinate dehydratase (150 aa).

Tyr26 (proton acceptor) is an active-site residue. Positions 77, 83, and 90 each coordinate substrate. His103 functions as the Proton donor in the catalytic mechanism. Residues 104–105 (LS) and Arg114 each bind substrate.

The protein belongs to the type-II 3-dehydroquinase family. In terms of assembly, homododecamer.

The catalysed reaction is 3-dehydroquinate = 3-dehydroshikimate + H2O. The protein operates within metabolic intermediate biosynthesis; chorismate biosynthesis; chorismate from D-erythrose 4-phosphate and phosphoenolpyruvate: step 3/7. Functionally, catalyzes a trans-dehydration via an enolate intermediate. The sequence is that of 3-dehydroquinate dehydratase from Erwinia tasmaniensis (strain DSM 17950 / CFBP 7177 / CIP 109463 / NCPPB 4357 / Et1/99).